A 156-amino-acid polypeptide reads, in one-letter code: Low-salt glycan biosynthesis protein Agl8 (156 aa).

Residues 14-15 (RI) and arginine 47 contribute to the substrate site. Residues 25 to 156 (ANVPLVSVDL…YVERYLDALD (132 aa)) form the Nudix hydrolase domain. The Mg(2+) site is built by glycine 60, glutamate 80, and glutamine 130. A Nudix box motif is present at residues 61 to 82 (GTVFKNETLTDALYRVADEELG).

It belongs to the Nudix hydrolase family. Requires Mg(2+) as cofactor.

It participates in protein modification; protein glycosylation. The protein operates within cell surface structure biogenesis; S-layer biogenesis. Functionally, nudix hydrolase involved in N-glycan biosynthetic pathway that takes place under low-salt conditions (1.75 M instead of 3.4 M). Participates in the formation of the tetrasaccharide present at 'Asn-532' of S-layer glycoprotein Csg, consisting of a sulfated hexose, 2 hexoses and rhamnose. Mediates attachment of sugar 3 in the tetrasaccharide. In Haloferax volcanii (strain ATCC 29605 / DSM 3757 / JCM 8879 / NBRC 14742 / NCIMB 2012 / VKM B-1768 / DS2) (Halobacterium volcanii), this protein is Low-salt glycan biosynthesis protein Agl8 (agl8).